The sequence spans 2207 residues: Mediator of RNA polymerase II transcription subunit 13-like (2207 aa).

Positions 337–355 are enriched in polar residues; sequence VQSAASHLGSQDGGMSTMH. 4 disordered regions span residues 337 to 368, 384 to 403, 431 to 479, and 519 to 574; these read VQSA…PKLH, AQSK…AAHS, VGPS…KRPL, and KYDK…VPVN. Over residues 356–368 the composition is skewed to basic residues; the sequence is SPKRSRKTPPKLH. Positions 384 to 394 are enriched in polar residues; the sequence is AQSKRSQMSTP. Over residues 442–453 the composition is skewed to low complexity; it reads PGFSAGLPSSSS. Residues 463–475 are compositionally biased toward basic and acidic residues; sequence KTTERQEKGDKLQ. A compositionally biased stretch (polar residues) spans 528 to 539; it reads SRNTSKQMNLNP. Residues 546 to 555 are compositionally biased toward pro residues; that stretch reads PISPLPPTLS. Residues serine 548 and serine 555 each carry the phosphoserine modification. The LXXLL motif 1 signature appears at 664–668; it reads LQRLL. A compositionally biased stretch (basic and acidic residues) spans 731–747; the sequence is GTEKDSLKKNKSEDGFG. The interval 731 to 767 is disordered; the sequence is GTEKDSLKKNKSEDGFGTKDVTTPGHSTPVPDGKNAM. Phosphoserine occurs at positions 812 and 821. A disordered region spans residues 816 to 847; the sequence is ELGAVSPALRSSKMPTVGTEERPPGKDGRAAG. Residues 834–844 show a composition bias toward basic and acidic residues; that stretch reads TEERPPGKDGR. Serine 918 is modified (phosphoserine). A disordered region spans residues 1004 to 1091; the sequence is DPDYVNTPQM…STTRPLNSVE (88 aa). Residues 1009–1019 show a composition bias toward polar residues; that stretch reads NTPQMNTPVTL. Positions 1020-1031 are enriched in low complexity; sequence NSAAPASNSGAG. The segment covering 1072 to 1087 has biased composition (polar residues); sequence TDQGSPASTPSTTRPL. The LXXLL motif 2 signature appears at 1224-1228; it reads LLLLL. The leucine-zipper stretch occupies residues 1379–1400; it reads LPIPTLLVGYDKEFLTISPFSL. Disordered stretches follow at residues 1523–1652 and 2042–2077; these read LMPP…SVTE and GNLH…QGER. The span at 1541–1593 shows a compositional bias: low complexity; sequence PGNAGSLPSNSGSGAPPAGSAFNPTSSSSANPTTSSSSASSGPPGSSAASAPG. Composition is skewed to polar residues over residues 1612–1624 and 1635–1649; these read QNPS…TDRT and PGQS…GQDS. Phosphoserine is present on serine 2080.

It belongs to the Mediator complex subunit 13 family. As to quaternary structure, component of the Mediator complex, which is composed of MED1, MED4, MED6, MED7, MED8, MED9, MED10, MED11, MED12, MED13, MED13L, MED14, MED15, MED16, MED17, MED18, MED19, MED20, MED21, MED22, MED23, MED24, MED25, MED26, MED27, MED29, MED30, MED31, CCNC, CDK8 and CDC2L6/CDK11. The MED12, MED13, CCNC and CDK8 subunits form a distinct module termed the CDK8 module. Mediator containing the CDK8 module is less active than Mediator lacking this module in supporting transcriptional activation. Individual preparations of the Mediator complex lacking one or more distinct subunits have been variously termed ARC, CRSP, DRIP, PC2, SMCC and TRAP. Highly expressed in heart and weakly expressed in brain, spleen, lung, liver, kidney and testis.

The protein localises to the nucleus. In terms of biological role, component of the Mediator complex, a coactivator involved in the regulated transcription of nearly all RNA polymerase II-dependent genes. Mediator functions as a bridge to convey information from gene-specific regulatory proteins to the basal RNA polymerase II transcription machinery. Mediator is recruited to promoters by direct interactions with regulatory proteins and serves as a scaffold for the assembly of a functional preinitiation complex with RNA polymerase II and the general transcription factors. This subunit may specifically regulate transcription of targets of the Wnt signaling pathway and SHH signaling pathway. The protein is Mediator of RNA polymerase II transcription subunit 13-like (Med13l) of Mus musculus (Mouse).